We begin with the raw amino-acid sequence, 457 residues long: MDSTTTPPSLRSNTRSALRLARNNKTLVKSHIPSLDLVLLSPKNNNGTPYPSPVSLSSPSSPVTLREILLLSPSPLRKSRTRLSNRFDMEAAEAAVTARRSKTKGGQNGLLASPSPRNFRRSRLRSEAMVDTKENTEPIVVVTDEKKQNQRKQKKLGRSKKEKHSSVPLLASPSPSSDQPQDVCQGDLERIRENISDLIMWRDVAKSTLWFGFGCICFLSTCFAAKGFNFSVFSAISYLGLLFLGVSFLSNTLRQRVTEEARRELKLSEDDVLRIARRMLPITNLAISKTSELFSGEPAMTLKVAPFVLMGAEYGYLITLWRLCAFGFFLSFTIPKLYSCYASQLNQKVECAQRRFVEAWGVCTHKKFVAGSAVTAFWNLTSLKTRFIAVFIIVVVIRYRRQNLQLDSEDEEEKKQQEKTHPEQQKSPEDKSTSPRSAEEEQALVLVAETKAPKKLY.

Positions A94–V183 are disordered. A compositionally biased stretch (basic and acidic residues) spans L124–T136. Over residues N149–K163 the composition is skewed to basic residues. The span at S166 to V183 shows a compositional bias: low complexity. The region spanning I195–T385 is the Reticulon domain. The next 4 membrane-spanning stretches (helical) occupy residues T208–F228, F230–S250, Y314–I334, and F377–I397. The segment at D407–Y457 is disordered. Residues E413–E439 are compositionally biased toward basic and acidic residues.

It localises to the endoplasmic reticulum membrane. This is Reticulon-like protein B18 (RTNLB18) from Arabidopsis thaliana (Mouse-ear cress).